A 197-amino-acid chain; its full sequence is Ribonuclease HII (197 aa).

Residues 4–197 (IWVCGVDEAG…VRKALESVAS (194 aa)) form the RNase H type-2 domain. Residues D10, E11, and D106 each contribute to the a divalent metal cation site.

It belongs to the RNase HII family. Mn(2+) is required as a cofactor. Mg(2+) serves as cofactor.

The protein localises to the cytoplasm. It carries out the reaction Endonucleolytic cleavage to 5'-phosphomonoester.. Its function is as follows. Endonuclease that specifically degrades the RNA of RNA-DNA hybrids. This Polynucleobacter necessarius subsp. necessarius (strain STIR1) protein is Ribonuclease HII.